A 325-amino-acid polypeptide reads, in one-letter code: Transaldolase (325 aa).

Residue Lys-125 is the Schiff-base intermediate with substrate of the active site.

It belongs to the transaldolase family. Type 2 subfamily.

It localises to the cytoplasm. It carries out the reaction D-sedoheptulose 7-phosphate + D-glyceraldehyde 3-phosphate = D-erythrose 4-phosphate + beta-D-fructose 6-phosphate. It functions in the pathway carbohydrate degradation; pentose phosphate pathway; D-glyceraldehyde 3-phosphate and beta-D-fructose 6-phosphate from D-ribose 5-phosphate and D-xylulose 5-phosphate (non-oxidative stage): step 2/3. Its function is as follows. Transaldolase is important for the balance of metabolites in the pentose-phosphate pathway. The sequence is that of Transaldolase from Campylobacter jejuni subsp. jejuni serotype O:23/36 (strain 81-176).